We begin with the raw amino-acid sequence, 210 residues long: RNA chaperone ProQ (210 aa).

The disordered stretch occupies residues 118–146; the sequence is KAAKPEKKRPARRVAAKGQHAKETTTNKA. Residues 123–132 show a composition bias toward basic residues; the sequence is EKKRPARRVA.

This sequence belongs to the ProQ family.

It is found in the cytoplasm. RNA chaperone with significant RNA binding, RNA strand exchange and RNA duplexing activities. The chain is RNA chaperone ProQ from Pasteurella multocida (strain Pm70).